We begin with the raw amino-acid sequence, 541 residues long: MGSSEVSIIPGLQKEEKAAVERRRLHVLKALKKLRIEADEAPVVAVLGSGGGLRAHIACLGVLSEMKEQGLLDAVTYLAGVSGSTWAISSLYTNDGDMEALEADLKHRFTRQEWDLAKSLQKTIQAARSENYSLTDFWAYMVISKQTRELPESHLSNMKKPVEEGTLPYPIFAAIDNDLQPSWQEARAPETWFEFTPHHAGFSALGAFVSITHFGSKFKKGRLVRTHPERDLTFLRGLWGSALGNTEVIREYIFDQLRNLTLKGLWRRAVANAKSIGHLIFARLLRLQESSQGEHPPPEDEGGEPEHTWLTEMLENWTRTSLEKQEQPHEDPERKGSLSNLMDFVKKTGICASKWEWGTTHNFLYKHGGIRDKIMSSRKHLHLVDAGLAINTPFPLVLPPTREVHLILSFDFSAGDPFETIRATTDYCRRHKIPFPQVEEAELDLWSKAPASCYILKGETGPVVMHFPLFNIDACGGDIEAWSDTYDTFKLADTYTLDVVVLLLALAKKNVRENKKKILRELMNVAGLYYPKDSARSCCLA.

The PLA2c domain occupies M1–A541. S82 serves as the catalytic Nucleophile. Residues L260 to Q292 are required for lipid droplet localization. At S337 the chain carries Phosphoserine. Residue D385 is the Proton acceptor of the active site. Position 538 is a cysteine methyl ester (C538). C538 is lipidated: S-farnesyl cysteine. A propeptide spans C539 to A541 (removed in mature form).

As to quaternary structure, (Microbial infection) Interacts with HCV non-structural protein 4B/NS4B; this interaction likely initiates the recruitment of replication complexes to lipid droplets. As to expression, highly expressed in heart and skeletal muscle.

It is found in the cell membrane. The protein resides in the endoplasmic reticulum membrane. It localises to the mitochondrion membrane. Its subcellular location is the lipid droplet. The enzyme catalyses a 1,2-diacyl-sn-glycero-3-phosphocholine + H2O = a 1-acyl-sn-glycero-3-phosphocholine + a fatty acid + H(+). It catalyses the reaction a 1-O-alkyl-2-acyl-sn-glycero-3-phosphocholine + H2O = a 1-O-alkyl-sn-glycero-3-phosphocholine + a fatty acid + H(+). The catalysed reaction is 1,2-dihexadecanoyl-sn-glycero-3-phosphocholine + H2O = 1-hexadecanoyl-sn-glycero-3-phosphocholine + hexadecanoate + H(+). It carries out the reaction 1-hexadecanoyl-2-(9Z-octadecenoyl)-sn-glycero-3-phosphocholine + H2O = 1-hexadecanoyl-sn-glycero-3-phosphocholine + (9Z)-octadecenoate + H(+). The enzyme catalyses 1-hexadecanoyl-2-(9Z,12Z-octadecadienoyl)-sn-glycero-3-phosphocholine + H2O = (9Z,12Z)-octadecadienoate + 1-hexadecanoyl-sn-glycero-3-phosphocholine + H(+). It catalyses the reaction 1-hexadecanoyl-2-(5Z,8Z,11Z,14Z-eicosatetraenoyl)-sn-glycero-3-phosphocholine + H2O = 1-hexadecanoyl-sn-glycero-3-phosphocholine + (5Z,8Z,11Z,14Z)-eicosatetraenoate + H(+). The catalysed reaction is 1-O-hexadecyl-2-(5Z,8Z,11Z,14Z)-eicosatetraenoyl-sn-glycero-3-phosphocholine + H2O = 1-O-hexadecyl-sn-glycero-3-phosphocholine + (5Z,8Z,11Z,14Z)-eicosatetraenoate + H(+). It carries out the reaction 1-hexadecanoyl-2-(5Z,8Z,11Z,14Z-eicosatetraenoyl)-sn-glycero-3-phosphocholine + H2O = 2-(5Z,8Z,11Z,14Z)-eicosatetraenoyl-sn-glycero-3-phosphocholine + hexadecanoate + H(+). The enzyme catalyses a 1-acyl-sn-glycero-3-phosphocholine + H2O = sn-glycerol 3-phosphocholine + a fatty acid + H(+). It catalyses the reaction 1-hexadecanoyl-sn-glycero-3-phosphocholine + H2O = sn-glycerol 3-phosphocholine + hexadecanoate + H(+). The catalysed reaction is 2 1-hexadecanoyl-sn-glycero-3-phosphocholine = 1,2-dihexadecanoyl-sn-glycero-3-phosphocholine + sn-glycerol 3-phosphocholine. It carries out the reaction 1-hexadecanoyl-sn-glycero-3-phosphoethanolamine + 1-hexadecanoyl-sn-glycero-3-phosphocholine = 1,2-dihexadecanoyl-sn-glycero-3-phosphoethanolamine + sn-glycerol 3-phosphocholine. The enzyme catalyses 1-hexadecanoyl-sn-glycero-3-phosphoethanolamine + 1-hexadecanoyl-sn-glycero-3-phosphocholine = sn-glycero-3-phosphoethanolamine + 1,2-dihexadecanoyl-sn-glycero-3-phosphocholine. It catalyses the reaction 2 1-hexadecanoyl-sn-glycero-3-phosphoethanolamine = 1,2-dihexadecanoyl-sn-glycero-3-phosphoethanolamine + sn-glycero-3-phosphoethanolamine. The catalysed reaction is 1-O-hexadecyl-sn-glycero-3-phosphocholine + 1-hexadecanoyl-sn-glycero-3-phosphocholine = 1-O-hexadecyl-2-hexadecanoyl-sn-glycero-3-phosphocholine + sn-glycerol 3-phosphocholine. It carries out the reaction a 1-O-(1Z-alkenyl)-sn-glycero-3-phosphoethanolamine + 1-hexadecanoyl-sn-glycero-3-phosphocholine = 1-O-(1Z)-alkenyl-2-hexadecanoyl-sn-glycero-3-phosphoethanolamine + sn-glycerol 3-phosphocholine. The enzyme catalyses 1-O-hexadecyl-sn-glycero-3-phosphocholine + 1-hexadecanoyl-sn-glycero-3-phosphoethanolamine = 1-O-hexadecyl-2-hexadecanoyl-sn-glycero-3-phosphocholine + sn-glycero-3-phosphoethanolamine. It catalyses the reaction 1-octadecanoyl-2-(5Z,8Z,11Z,14Z)-eicosatetraenoyl-sn-glycero-3-phosphoethanolamine + 1-hexadecanoyl-sn-glycero-3-phosphocholine = 1-octadecanoyl-sn-glycero-3-phosphoethanolamine + 1-hexadecanoyl-2-(5Z,8Z,11Z,14Z-eicosatetraenoyl)-sn-glycero-3-phosphocholine. The catalysed reaction is 1-octadecanoyl-2-(5Z,8Z,11Z,14Z)-eicosatetraenoyl-sn-glycero-3-phosphoethanolamine + 1-O-hexadecyl-sn-glycero-3-phosphocholine = 1-octadecanoyl-sn-glycero-3-phosphoethanolamine + 1-O-hexadecyl-2-(5Z,8Z,11Z,14Z)-eicosatetraenoyl-sn-glycero-3-phosphocholine. It carries out the reaction 1-hexadecanoyl-2-(9Z,12Z-octadecadienoyl)-sn-glycero-3-phosphocholine + a 1-O-(1Z-alkenyl)-sn-glycero-3-phosphoethanolamine = 1-O-(1Z-alkenyl)-2-(9Z,12Z-octadecadienoyl)-sn-glycero-3-phosphoethanolamine + 1-hexadecanoyl-sn-glycero-3-phosphocholine. The enzyme catalyses 1-hexadecanoyl-2-(5Z,8Z,11Z,14Z-eicosatetraenoyl)-sn-glycero-3-phosphocholine + a 1-O-(1Z-alkenyl)-sn-glycero-3-phosphoethanolamine = 1-O-(1Z)-alkenyl-2-(5Z,8Z,11Z,14Z)-eicosatetraenoyl-sn-glycero-3-phosphoethanolamine + 1-hexadecanoyl-sn-glycero-3-phosphocholine. Its activity is regulated as follows. Not regulated by calcium, coenzyme A or ATP. Lysophospholipase activity is inhibited by palmitoyl-CoA. Lysophospholipase and O-acyltransferase activities are inhibited by methylarachidonoylfluorophosphonate. Lysophospholipase activity is inhibited by phosphatidate or lysophosphatidate. O-acyltransferase activity is up-regulated at low concentration (10-20 uM) of phosphatidate or lysophosphatidate, but inhibited at higher concentrations. Its function is as follows. Calcium-independent phospholipase, lysophospholipase and O-acyltransferase involved in phospholipid remodeling with implications in endoplasmic reticulum membrane homeostasis and lipid droplet biogenesis. Preferentially hydrolyzes the ester bond of the fatty acyl group attached at the sn-2 position of phospholipids with choline and ethanolamine head groups, producing lysophospholipids that are used in deacylation-reacylation cycles. Transfers the sn-1 fatty acyl from one lysophospholipid molecule to the sn-2 position of another lysophospholipid to form diacyl, alkylacyl and alkenylacyl glycerophospholipids. Cleaves ester bonds but not alkyl or alkenyl ether bonds at sn-1 position of lysophospholipids. Catalyzes sn-2 fatty acyl transfer from phospholipids to the sn-2 position of 1-O-alkyl or 1-O-alkenyl lysophospholipids with lower efficiency. In response to dietary fatty acids, may play a role in the formation of nascent lipid droplets from the endoplasmic reticulum likely by regulating the phospholipid composition of these organelles. (Microbial infection) May play a role in replication and assembly of human hepatitis C virus (HCV). In response to HCV infection, promotes remodeling of host endoplasmic reticulum membranes to form organelle-like structures called membranous web, where HCV replication occur. Can further mediate translocation of replication complexes to lipid droplets to enable virion assembly. Functionally, (Microbial infection) May facilitate human T-lymphotropic virus type 1 (HTLV-1) infection by promoting leukotriene B4 (LTB4) biosynthesis. LTB4 acts as a chemoattractant for HTLV-1-infected CD4-positive T cells and favors cell to cell viral transmission. The sequence is that of Cytosolic phospholipase A2 gamma (PLA2G4C) from Homo sapiens (Human).